Reading from the N-terminus, the 438-residue chain is Ubiquitin carboxyl-terminal hydrolase 27 (438 aa).

The USP domain occupies arginine 78–glutamine 421. Residue cysteine 87 is the Nucleophile of the active site. Histidine 380 acts as the Proton acceptor in catalysis.

The protein belongs to the peptidase C19 family. In terms of assembly, interacts with phosphorylated BCL2L11 isoform BIMEL; this interaction leads to BCL2L11 deubiquitination and stabilization.

The protein resides in the cytoplasm. Its subcellular location is the cytosol. The protein localises to the nucleus. It carries out the reaction Thiol-dependent hydrolysis of ester, thioester, amide, peptide and isopeptide bonds formed by the C-terminal Gly of ubiquitin (a 76-residue protein attached to proteins as an intracellular targeting signal).. Deubiquitinase involved in innate antiviral immunity by mediating deubiquitination of CGAS and RIGI. Negatively regulates RIGI by mediating 'Lys-63'-linked deubiquitination of RIGI, inhibiting type I interferon signaling. Also regulates 'Lys-63'-linked ubiquitination level of MDA5/IFIH1. Acts as a positive regulator of the cGAS-STING pathway by catalyzing 'Lys-48'-linked deubiquitination of CGAS, thereby promoting its stabilization. Can reduce the levels of BCL2L11/BIM ubiquitination and stabilize BCL2L11 in response to the RAF-MAPK-degradation signal. By acting on BCL2L11 levels, may counteract the anti-apoptotic effects of MAPK activity. The polypeptide is Ubiquitin carboxyl-terminal hydrolase 27 (Mus musculus (Mouse)).